Reading from the N-terminus, the 341-residue chain is Phenylalanine--tRNA ligase alpha subunit (341 aa).

Glu254 lines the Mg(2+) pocket.

This sequence belongs to the class-II aminoacyl-tRNA synthetase family. Phe-tRNA synthetase alpha subunit type 1 subfamily. Tetramer of two alpha and two beta subunits. Mg(2+) serves as cofactor.

The protein localises to the cytoplasm. The enzyme catalyses tRNA(Phe) + L-phenylalanine + ATP = L-phenylalanyl-tRNA(Phe) + AMP + diphosphate + H(+). This Chlorobium phaeobacteroides (strain DSM 266 / SMG 266 / 2430) protein is Phenylalanine--tRNA ligase alpha subunit.